A 91-amino-acid chain; its full sequence is Protein translocase subunit SecG (91 aa).

Helical transmembrane passes span 16–36 and 71–91; these read HTFL…VVLL and LTII…YLGM.

Belongs to the SecG family. In terms of assembly, component of the Sec protein translocase complex. Heterotrimer consisting of SecY, SecE and SecG subunits. The heterotrimers can form oligomers, although 1 heterotrimer is thought to be able to translocate proteins. Interacts with SecDF, and other proteins may be involved. The channel interacts with SecA via subunit SecY. Also part of the accessory SecA2/SecY2 protein translocation apparatus required to export cell wall protein GspB.

It localises to the cell membrane. In terms of biological role, subunit of the protein translocation channel SecYEG. While not essential, it considerably increases the export efficiency of extracellular proteins. This chain is Protein translocase subunit SecG, found in Staphylococcus aureus (strain NCTC 8325 / PS 47).